The sequence spans 225 residues: Ribonuclease HII (225 aa).

An RNase H type-2 domain is found at Asp28–Glu220. The a divalent metal cation site is built by Asp34, Glu35, and Asp129.

This sequence belongs to the RNase HII family. Requires Mn(2+) as cofactor. Mg(2+) serves as cofactor.

It is found in the cytoplasm. It catalyses the reaction Endonucleolytic cleavage to 5'-phosphomonoester.. Its function is as follows. Endonuclease that specifically degrades the RNA of RNA-DNA hybrids. The sequence is that of Ribonuclease HII from Desulfotalea psychrophila (strain LSv54 / DSM 12343).